We begin with the raw amino-acid sequence, 130 residues long: Fumarate reductase subunit C (130 aa).

Helical transmembrane passes span 37–57 (VWFS…PAGW), 60–80 (FVGF…LLAA), and 109–129 (VIKA…AVAL).

It belongs to the FrdC family. Part of an enzyme complex containing four subunits: a flavoprotein (FrdA), an iron-sulfur protein (FrdB), and two hydrophobic anchor proteins (FrdC and FrdD).

It is found in the cell inner membrane. Functionally, two distinct, membrane-bound, FAD-containing enzymes are responsible for the catalysis of fumarate and succinate interconversion; fumarate reductase is used in anaerobic growth, and succinate dehydrogenase is used in aerobic growth. Anchors the catalytic components of the fumarate reductase complex to the cell inner membrane, binds quinones. This chain is Fumarate reductase subunit C, found in Yersinia enterocolitica serotype O:8 / biotype 1B (strain NCTC 13174 / 8081).